Reading from the N-terminus, the 201-residue chain is Glutathione peroxidase 1 (201 aa).

Phosphoserine is present on S32. Residue U47 is part of the active site. Residue U47 is a non-standard amino acid, selenocysteine. Residues K86, K112, and K146 each carry the N6-acetyllysine; alternate modification. 3 positions are modified to N6-succinyllysine; alternate: K86, K112, and K146. A phosphoserine mark is found at S195 and S199.

This sequence belongs to the glutathione peroxidase family. In terms of assembly, homotetramer. Interacts with MIEN1. During periods of oxidative stress, Sec-47 may react with a superoxide radical, irreversibly lose hydroselenide and be converted to dehydroalanine.

It is found in the cytoplasm. The protein localises to the mitochondrion. It carries out the reaction 2 glutathione + H2O2 = glutathione disulfide + 2 H2O. The enzyme catalyses a hydroperoxy polyunsaturated fatty acid + 2 glutathione = a hydroxy polyunsaturated fatty acid + glutathione disulfide + H2O. It catalyses the reaction tert-butyl hydroperoxide + 2 glutathione = tert-butanol + glutathione disulfide + H2O. The catalysed reaction is cumene hydroperoxide + 2 glutathione = 2-phenylpropan-2-ol + glutathione disulfide + H2O. It carries out the reaction (13S)-hydroperoxy-(9Z,11E)-octadecadienoate + 2 glutathione = (13S)-hydroxy-(9Z,11E)-octadecadienoate + glutathione disulfide + H2O. The enzyme catalyses (9S)-hydroperoxy-(10E,12Z)-octadecadienoate + 2 glutathione = (9S)-hydroxy-(10E,12Z)-octadecadienoate + glutathione disulfide + H2O. It catalyses the reaction (5S)-hydroperoxy-(6E,8Z,11Z,14Z)-eicosatetraenoate + 2 glutathione = (5S)-hydroxy-(6E,8Z,11Z,14Z)-eicosatetraenoate + glutathione disulfide + H2O. The catalysed reaction is (12S)-hydroperoxy-(5Z,8Z,10E,14Z)-eicosatetraenoate + 2 glutathione = (12S)-hydroxy-(5Z,8Z,10E,14Z)-eicosatetraenoate + glutathione disulfide + H2O. It carries out the reaction (12R)-hydroperoxy-(5Z,8Z,10E,14Z)-eicosatetraenoate + 2 glutathione = (12R)-hydroxy-(5Z,8Z,10E,14Z)-eicosatetraenoate + glutathione disulfide + H2O. The enzyme catalyses (15S)-hydroperoxy-(5Z,8Z,11Z,13E)-eicosatetraenoate + 2 glutathione = (15S)-hydroxy-(5Z,8Z,11Z,13E)-eicosatetraenoate + glutathione disulfide + H2O. It catalyses the reaction (5S)-hydroperoxy-(6E,8Z,11Z,14Z,17Z)-eicosapentaenoate + 2 glutathione = (5S)-hydroxy-(6E,8Z,11Z,14Z,17Z)-eicosapentaenoate + glutathione disulfide + H2O. The catalysed reaction is (12S)-hydroperoxy-(5Z,8Z,10E,14Z,17Z)-eicosapentaenoate + 2 glutathione = (12S)-hydroxy-(5Z,8Z,10E,14Z,17Z)-eicosapentaenoate + glutathione disulfide + H2O. It carries out the reaction (15S)-hydroperoxy-(5Z,8Z,11Z,13E,17Z)-eicosapentaenoate + 2 glutathione = (15S)-hydroxy-(5Z,8Z,11Z,13E,17Z)-eicosapentaenoate + glutathione disulfide + H2O. The enzyme catalyses (15S)-hydroperoxy-(11Z,13E)-eicosadienoate + 2 glutathione = (15S)-hydroxy-(11Z,13E)-eicosadienoate + glutathione disulfide + H2O. It catalyses the reaction (17S)-hydroperoxy-(4Z,7Z,10Z,13Z,15E,19Z)-docosahexaenoate + 2 glutathione = (17S)-hydroxy-(4Z,7Z,10Z,13Z,15E,19Z)-docosahexaenoate + glutathione disulfide + H2O. Its function is as follows. Catalyzes the reduction of hydroperoxides in a glutathione-dependent manner thus regulating cellular redox homeostasis. Can reduce small soluble hydroperoxides such as H2O2, cumene hydroperoxide and tert-butyl hydroperoxide, as well as several fatty acid-derived hydroperoxides. In platelets catalyzes the reduction of 12-hydroperoxyeicosatetraenoic acid, the primary product of the arachidonate 12-lipoxygenase pathway. The chain is Glutathione peroxidase 1 (GPX1) from Pongo pygmaeus (Bornean orangutan).